The following is a 389-amino-acid chain: Putative sugar efflux transporter DR_1322 (389 aa).

Transmembrane regions (helical) follow at residues 10–30, 34–54, 69–89, 96–116, 135–155, 161–181, 211–231, 246–266, 281–301, 308–328, 341–361, and 363–383; these read AVLL…LFAV, GMTP…AVLV, KPLV…LSGV, MATG…VFAF, VLRA…AAVL, SGVF…LLFI, GWVV…MVMF, VGFL…LFVL, LLLF…PLLI, AAVL…LMPG, SVVG…VFGY, and PVFL…LWAT.

The protein belongs to the major facilitator superfamily. Set transporter family.

Its subcellular location is the cell membrane. In terms of biological role, involved in the efflux of sugars. The physiological role may be the detoxification of non-metabolizable sugar analogs. The sequence is that of Putative sugar efflux transporter DR_1322 from Deinococcus radiodurans (strain ATCC 13939 / DSM 20539 / JCM 16871 / CCUG 27074 / LMG 4051 / NBRC 15346 / NCIMB 9279 / VKM B-1422 / R1).